The primary structure comprises 457 residues: Bifunctional protein GlmU (457 aa).

Positions 1–227 (MTQLSVVILA…FMEVEGANNR (227 aa)) are pyrophosphorylase. UDP-N-acetyl-alpha-D-glucosamine contacts are provided by residues 9–12 (LAAG), Lys-23, Gln-74, 79–80 (GT), 101–103 (YGD), Gly-138, Glu-152, Asn-167, and Asn-225. Asp-103 contacts Mg(2+). Asn-225 contacts Mg(2+). The segment at 228–248 (LQLAALERFYQKTQAEKLLLA) is linker. Residues 249 to 457 (GVRLIDPARF…QRPTKKKIAD (209 aa)) form an N-acetyltransferase region. The UDP-N-acetyl-alpha-D-glucosamine site is built by Arg-331 and Lys-349. The active-site Proton acceptor is His-361. Residues Tyr-364 and Asn-375 each coordinate UDP-N-acetyl-alpha-D-glucosamine. Residues Ala-378, 384–385 (NY), Ser-403, Ala-421, and Arg-438 each bind acetyl-CoA.

The protein in the N-terminal section; belongs to the N-acetylglucosamine-1-phosphate uridyltransferase family. In the C-terminal section; belongs to the transferase hexapeptide repeat family. In terms of assembly, homotrimer. The cofactor is Mg(2+).

The protein localises to the cytoplasm. It carries out the reaction alpha-D-glucosamine 1-phosphate + acetyl-CoA = N-acetyl-alpha-D-glucosamine 1-phosphate + CoA + H(+). The catalysed reaction is N-acetyl-alpha-D-glucosamine 1-phosphate + UTP + H(+) = UDP-N-acetyl-alpha-D-glucosamine + diphosphate. It participates in nucleotide-sugar biosynthesis; UDP-N-acetyl-alpha-D-glucosamine biosynthesis; N-acetyl-alpha-D-glucosamine 1-phosphate from alpha-D-glucosamine 6-phosphate (route II): step 2/2. Its pathway is nucleotide-sugar biosynthesis; UDP-N-acetyl-alpha-D-glucosamine biosynthesis; UDP-N-acetyl-alpha-D-glucosamine from N-acetyl-alpha-D-glucosamine 1-phosphate: step 1/1. The protein operates within bacterial outer membrane biogenesis; LPS lipid A biosynthesis. Catalyzes the last two sequential reactions in the de novo biosynthetic pathway for UDP-N-acetylglucosamine (UDP-GlcNAc). The C-terminal domain catalyzes the transfer of acetyl group from acetyl coenzyme A to glucosamine-1-phosphate (GlcN-1-P) to produce N-acetylglucosamine-1-phosphate (GlcNAc-1-P), which is converted into UDP-GlcNAc by the transfer of uridine 5-monophosphate (from uridine 5-triphosphate), a reaction catalyzed by the N-terminal domain. The chain is Bifunctional protein GlmU from Actinobacillus pleuropneumoniae serotype 5b (strain L20).